A 379-amino-acid chain; its full sequence is Queuine tRNA-ribosyltransferase (379 aa).

D94 functions as the Proton acceptor in the catalytic mechanism. Substrate contacts are provided by residues 94–98 (DSGGF), D148, Q191, and G218. Positions 249-255 (GVGSPDS) are RNA binding. D268 serves as the catalytic Nucleophile. The RNA binding; important for wobble base 34 recognition stretch occupies residues 273-277 (TRIAR). 4 residues coordinate Zn(2+): C306, C308, C311, and H337.

It belongs to the queuine tRNA-ribosyltransferase family. As to quaternary structure, homodimer. Within each dimer, one monomer is responsible for RNA recognition and catalysis, while the other monomer binds to the replacement base PreQ1. Requires Zn(2+) as cofactor.

The enzyme catalyses 7-aminomethyl-7-carbaguanine + guanosine(34) in tRNA = 7-aminomethyl-7-carbaguanosine(34) in tRNA + guanine. It participates in tRNA modification; tRNA-queuosine biosynthesis. Functionally, catalyzes the base-exchange of a guanine (G) residue with the queuine precursor 7-aminomethyl-7-deazaguanine (PreQ1) at position 34 (anticodon wobble position) in tRNAs with GU(N) anticodons (tRNA-Asp, -Asn, -His and -Tyr). Catalysis occurs through a double-displacement mechanism. The nucleophile active site attacks the C1' of nucleotide 34 to detach the guanine base from the RNA, forming a covalent enzyme-RNA intermediate. The proton acceptor active site deprotonates the incoming PreQ1, allowing a nucleophilic attack on the C1' of the ribose to form the product. After dissociation, two additional enzymatic reactions on the tRNA convert PreQ1 to queuine (Q), resulting in the hypermodified nucleoside queuosine (7-(((4,5-cis-dihydroxy-2-cyclopenten-1-yl)amino)methyl)-7-deazaguanosine). This chain is Queuine tRNA-ribosyltransferase, found in Bacillus mycoides (strain KBAB4) (Bacillus weihenstephanensis).